Consider the following 643-residue polypeptide: Threonine--tRNA ligase (643 aa).

The 62-residue stretch at 3 to 64 folds into the TGS domain; the sequence is DMINITFPDG…QEDGAVEIIT (62 aa). Residues 245 to 542 form a catalytic region; sequence DHRKLGKELK…LIEEHKGALP (298 aa). C338, H389, and H519 together coordinate Zn(2+).

This sequence belongs to the class-II aminoacyl-tRNA synthetase family. In terms of assembly, homodimer. The cofactor is Zn(2+).

The protein localises to the cytoplasm. The catalysed reaction is tRNA(Thr) + L-threonine + ATP = L-threonyl-tRNA(Thr) + AMP + diphosphate + H(+). Functionally, catalyzes the attachment of threonine to tRNA(Thr) in a two-step reaction: L-threonine is first activated by ATP to form Thr-AMP and then transferred to the acceptor end of tRNA(Thr). Also edits incorrectly charged L-seryl-tRNA(Thr). The sequence is that of Threonine--tRNA ligase from Bacillus velezensis (strain DSM 23117 / BGSC 10A6 / LMG 26770 / FZB42) (Bacillus amyloliquefaciens subsp. plantarum).